The primary structure comprises 521 residues: AAA ATPase forming ring-shaped complexes (521 aa).

Positions 4–44 (TEDLAALNDRLMAKNHALAEALNRAGKELTKAKSRLAQLAQ) form a coiled coil. Position 235-240 (235-240 (GNGKTM)) interacts with ATP.

Belongs to the AAA ATPase family. In terms of assembly, homohexamer. Assembles into a hexameric ring structure.

The polypeptide is AAA ATPase forming ring-shaped complexes (Bifidobacterium longum subsp. infantis (strain ATCC 15697 / DSM 20088 / JCM 1222 / NCTC 11817 / S12)).